Consider the following 45-residue polypeptide: Myotoxin-2 (45 aa).

Intrachain disulfides connect C4–C36, C11–C30, and C18–C37.

This sequence belongs to the crotamine-myotoxin family. As to quaternary structure, monomer. Expressed by the venom gland.

Its subcellular location is the secreted. Functionally, cationic peptide that possesses multiple functions. It acts as a cell-penetrating peptide (CPP), and as a potent voltage-gated potassium channel (Kv) inhibitor. It exhibits antimicrobial activities, hind limb paralysis, and severe muscle necrosis by a non-enzymatic mechanism. The chain is Myotoxin-2 from Crotalus viridis viridis (Prairie rattlesnake).